We begin with the raw amino-acid sequence, 265 residues long: Indole-3-glycerol phosphate synthase (265 aa).

This sequence belongs to the TrpC family.

The catalysed reaction is 1-(2-carboxyphenylamino)-1-deoxy-D-ribulose 5-phosphate + H(+) = (1S,2R)-1-C-(indol-3-yl)glycerol 3-phosphate + CO2 + H2O. Its pathway is amino-acid biosynthesis; L-tryptophan biosynthesis; L-tryptophan from chorismate: step 4/5. This chain is Indole-3-glycerol phosphate synthase, found in Xanthomonas campestris pv. campestris (strain 8004).